A 1398-amino-acid chain; its full sequence is DNA topoisomerase 2 (1398 aa).

ATP contacts are provided by residues Asn69, Asn103, 131-133, and 144-151; these read SDN and GRNGFGAK. Residues 260–317 form a disordered region; the sequence is NSNDNKNNKGQNDNNNNNNNNNDENANQNNDNLDVSLSNEPADGTPTKNNNNNNNNND. Residues 267–291 show a composition bias toward low complexity; it reads NKGQNDNNNNNNNNNDENANQNNDN. 411–413 contacts ATP; sequence QTK. The Toprim domain maps to 493–608; it reads CTLILTEGDS…SLLKHKGFLS (116 aa). Mg(2+) is bound by residues Glu499, Asp577, and Asp579. The Topo IIA-type catalytic domain maps to 739 to 1191; sequence IPNIMDGWKP…TVETMWLKDI (453 aa). Tyr830 acts as the O-(5'-phospho-DNA)-tyrosine intermediate in catalysis. An interaction with DNA region spans residues 1012 to 1021; sequence KLKSTLTTTN. Disordered stretches follow at residues 1214 to 1250 and 1262 to 1361; these read KFKVARKQGPSSMKKKKKKKKLSSDEESEGGDTSDSS and NTNK…NSSI. The segment covering 1262–1276 has biased composition (low complexity); that stretch reads NTNKKTTTSSNNVNN. 2 stretches are compositionally biased toward polar residues: residues 1287–1300 and 1348–1357; these read LNSNELDNTLSVSK and DSTNDNNSEL.

This sequence belongs to the type II topoisomerase family. As to quaternary structure, homodimer. Mg(2+) serves as cofactor. Requires Mn(2+) as cofactor. It depends on Ca(2+) as a cofactor.

The protein localises to the nucleus. The catalysed reaction is ATP-dependent breakage, passage and rejoining of double-stranded DNA.. Control of topological states of DNA by transient breakage and subsequent rejoining of DNA strands. Topoisomerase II makes double-strand breaks. The sequence is that of DNA topoisomerase 2 (TOP2) from Plasmodium falciparum (isolate K1 / Thailand).